The sequence spans 329 residues: L-lactate dehydrogenase (329 aa).

NAD(+) is bound by residues valine 18, glutamate 39, lysine 46, tyrosine 71, and 85 to 86 (GA). Substrate is bound by residues glutamine 88 and arginine 94. NAD(+) is bound by residues serine 107, 124-126 (AAN), and serine 149. 126–129 (NPVD) lines the substrate pocket. Residue 154–157 (DSAR) coordinates substrate. 2 residues coordinate beta-D-fructose 1,6-bisphosphate: arginine 159 and histidine 174. Histidine 181 functions as the Proton acceptor in the catalytic mechanism. Tyrosine 226 bears the Phosphotyrosine mark. A substrate-binding site is contributed by threonine 235.

It belongs to the LDH/MDH superfamily. LDH family. In terms of assembly, homotetramer.

It is found in the cytoplasm. It catalyses the reaction (S)-lactate + NAD(+) = pyruvate + NADH + H(+). It participates in fermentation; pyruvate fermentation to lactate; (S)-lactate from pyruvate: step 1/1. Allosterically activated by fructose 1,6-bisphosphate (FBP). Catalyzes the conversion of lactate to pyruvate. This chain is L-lactate dehydrogenase, found in Streptococcus equinus (Streptococcus bovis).